The sequence spans 776 residues: Kinesin-like protein KLP1 (776 aa).

Residues 5 to 335 enclose the Kinesin motor domain; sequence AVKVFVRTRP…LRFASRVRTL (331 aa). An ATP-binding site is contributed by 91-98; sequence GQTGAGKT. Residues 348 to 371 adopt a coiled-coil conformation; that stretch reads ALLLRRYERQIKELKAELAMRDTL. The disordered stretch occupies residues 441–535; the sequence is RRATEEGSGA…SNWGDAGPLS (95 aa). Residues 447–460 show a composition bias toward low complexity; the sequence is GSGAAARGGDSAGP. Positions 579 to 657 form a coiled coil; it reads ALADTKASIR…SLKSAREELE (79 aa). The tract at residues 658–776 is globular; it reads PQIQAVAVAR…TQAVNRGLAR (119 aa).

The protein belongs to the TRAFAC class myosin-kinesin ATPase superfamily. Kinesin family.

Its subcellular location is the cytoplasm. It is found in the cytoskeleton. It localises to the flagellum axoneme. Its function is as follows. May play a role in rotation or twisting of the central pair microtubules of the flagella axoneme. The protein is Kinesin-like protein KLP1 (KLP1) of Chlamydomonas reinhardtii (Chlamydomonas smithii).